Consider the following 205-residue polypeptide: Putative epidermin response regulator (205 aa).

Positions 103–200 (KYIKYVNDDF…ERKLGYKILI (98 aa)) form a DNA-binding region, ompR/PhoB-type.

To the C-terminus of E.coli phosphate regulon transcriptional regulatory protein PhoB.

The protein is Putative epidermin response regulator (epiQ) of Staphylococcus epidermidis.